The primary structure comprises 456 residues: Phospholipase A1 member A (456 aa).

A signal peptide spans 1-24 (MCPGLWGTCFWLWGSLLWLSIGRS). The active-site Nucleophile is Ser166. Asp190 serves as the catalytic Charge relay system. An intrachain disulfide couples Cys245 to Cys258. His260 functions as the Charge relay system in the catalytic mechanism. 2 disulfide bridges follow: Cys282–Cys293 and Cys296–Cys304. Asn365 carries an N-linked (GlcNAc...) asparagine glycan.

Belongs to the AB hydrolase superfamily. Lipase family.

It is found in the secreted. It carries out the reaction a 1,2-diacyl-sn-glycero-3-phospho-L-serine + H2O = a 2-acyl-sn-glycero-3-phospho-L-serine + a fatty acid + H(+). It catalyses the reaction 1,2-di-(9Z)-octadecenoyl-sn-glycero-3-phospho-L-serine + H2O = 2-(9Z-octadecenoyl)-sn-glycero-3-phospho-L-serine + (9Z)-octadecenoate + H(+). The enzyme catalyses 1-hexadecanoyl-2-(5Z,8Z,11Z,14Z-eicosatetraenoyl)-sn-glycero-3-phospho-L-serine + H2O = 2-(5Z,8Z,11Z,14Z)-eicosatetraenoyl-sn-glycero-3-phospho-L-serine + hexadecanoate + H(+). The catalysed reaction is a 1-acyl-sn-glycero-3-phospho-L-serine + H2O = sn-glycero-3-phospho-L-serine + a fatty acid + H(+). It carries out the reaction 1-(9Z-octadecenoyl)-sn-glycero-3-phospho-L-serine + H2O = sn-glycero-3-phospho-L-serine + (9Z)-octadecenoate + H(+). Functionally, hydrolyzes the ester bond of the acyl group attached at the sn-1 position of phosphatidylserines (phospholipase A1 activity) and 1-acyl-2-lysophosphatidylserines (lysophospholipase activity) in the pathway of phosphatidylserines acyl chain remodeling. Cleaves phosphatidylserines exposed on the outer leaflet of the plasma membrane of apoptotic cells producing 2-acyl-1-lysophosphatidylserines, which in turn enhance mast cell activation and histamine production. Has no activity toward other glycerophospholipids including phosphatidylcholines, phosphatidylethanolamines, phosphatidic acids or phosphatidylinositols, or glycerolipids such as triolein. The sequence is that of Phospholipase A1 member A from Rattus norvegicus (Rat).